The chain runs to 454 residues: tRNA modification GTPase MnmE (454 aa).

(6S)-5-formyl-5,6,7,8-tetrahydrofolate is bound by residues R23, E80, and K120. Positions 216-377 constitute a TrmE-type G domain; sequence GMKVVIAGRP…LRDHLKQSMG (162 aa). N226 lines the K(+) pocket. Residues 226 to 231, 245 to 251, 270 to 273, 335 to 338, and 358 to 360 contribute to the GTP site; these read NAGKSS, TDIAGTT, DTAG, NKAD, and SAR. A Mg(2+)-binding site is contributed by S230. Positions 245, 247, and 250 each coordinate K(+). T251 is a binding site for Mg(2+). (6S)-5-formyl-5,6,7,8-tetrahydrofolate is bound at residue K454.

It belongs to the TRAFAC class TrmE-Era-EngA-EngB-Septin-like GTPase superfamily. TrmE GTPase family. In terms of assembly, homodimer. Heterotetramer of two MnmE and two MnmG subunits. It depends on K(+) as a cofactor.

It is found in the cytoplasm. Its function is as follows. Exhibits a very high intrinsic GTPase hydrolysis rate. Involved in the addition of a carboxymethylaminomethyl (cmnm) group at the wobble position (U34) of certain tRNAs, forming tRNA-cmnm(5)s(2)U34. In Pectobacterium carotovorum subsp. carotovorum (strain PC1), this protein is tRNA modification GTPase MnmE.